A 109-amino-acid polypeptide reads, in one-letter code: Fluoride-specific ion channel FluC 1 (109 aa).

4 consecutive transmembrane segments (helical) span residues 1-21 (MVIVYLAIACGFGALVRYFFS), 29-49 (LPLGTLIANLLGCFLIGVFYN), 55-75 (EVYAILATGFCGGLTTFSTLN), and 87-107 (VFYSYLILTYLGGLVAIFLGI). 2 residues coordinate Na(+): Gly-66 and Thr-69.

Belongs to the fluoride channel Fluc/FEX (TC 1.A.43) family.

Its subcellular location is the cell membrane. It catalyses the reaction fluoride(in) = fluoride(out). With respect to regulation, na(+) is not transported, but it plays an essential structural role and its presence is essential for fluoride channel function. Functionally, fluoride-specific ion channel. Important for reducing fluoride concentration in the cell, thus reducing its toxicity. The polypeptide is Fluoride-specific ion channel FluC 1 (Streptococcus pneumoniae (strain ATCC BAA-255 / R6)).